Here is a 195-residue protein sequence, read N- to C-terminus: Dual-action ribosomal maturation protein DarP (195 aa).

Belongs to the DarP family.

The protein localises to the cytoplasm. Functionally, member of a network of 50S ribosomal subunit biogenesis factors which assembles along the 30S-50S interface, preventing incorrect 23S rRNA structures from forming. Promotes peptidyl transferase center (PTC) maturation. The sequence is that of Dual-action ribosomal maturation protein DarP from Stenotrophomonas maltophilia (strain K279a).